The following is a 253-amino-acid chain: 3-deoxy-manno-octulosonate cytidylyltransferase (253 aa).

Belongs to the KdsB family.

It localises to the cytoplasm. The enzyme catalyses 3-deoxy-alpha-D-manno-oct-2-ulosonate + CTP = CMP-3-deoxy-beta-D-manno-octulosonate + diphosphate. Its pathway is nucleotide-sugar biosynthesis; CMP-3-deoxy-D-manno-octulosonate biosynthesis; CMP-3-deoxy-D-manno-octulosonate from 3-deoxy-D-manno-octulosonate and CTP: step 1/1. It functions in the pathway bacterial outer membrane biogenesis; lipopolysaccharide biosynthesis. Activates KDO (a required 8-carbon sugar) for incorporation into bacterial lipopolysaccharide in Gram-negative bacteria. The chain is 3-deoxy-manno-octulosonate cytidylyltransferase from Geotalea daltonii (strain DSM 22248 / JCM 15807 / FRC-32) (Geobacter daltonii).